The sequence spans 295 residues: MDRIALMDAPDTDWSAWPAPAKLNLFLQITGRRADGYHLLQTVFRLLDWGDTVHLRVRSGGQIRRVGESLPGVAEDDDLVIRAARLLQSATGAQAGAEIRVDKRIPAGGGFGGGSSDAATVLVALNALWGLGLAADALAELGLQLGADVPVFVRGHNAWAEGVGEQLTPISLPEAAYLLVDPGVHVPTPALFRSQELTRDAAPAKIADFASGSLLDNAFEPVLRRREPAVEAVFQALSRVGTPRLTGSGSGCFVEFATRAAAEQALAQLPGGLRAWVAEGASHSPLLDARDARQV.

The active site involves Lys-22. Position 106 to 116 (106 to 116) interacts with ATP; sequence PAGGGFGGGSS. Asp-148 is a catalytic residue.

Belongs to the GHMP kinase family. IspE subfamily.

The catalysed reaction is 4-CDP-2-C-methyl-D-erythritol + ATP = 4-CDP-2-C-methyl-D-erythritol 2-phosphate + ADP + H(+). The protein operates within isoprenoid biosynthesis; isopentenyl diphosphate biosynthesis via DXP pathway; isopentenyl diphosphate from 1-deoxy-D-xylulose 5-phosphate: step 3/6. In terms of biological role, catalyzes the phosphorylation of the position 2 hydroxy group of 4-diphosphocytidyl-2C-methyl-D-erythritol. The chain is 4-diphosphocytidyl-2-C-methyl-D-erythritol kinase from Xanthomonas axonopodis pv. citri (strain 306).